The chain runs to 511 residues: Cytochrome P450 4B1 (511 aa).

Residues glutamate 315 and cysteine 453 each coordinate heme.

It belongs to the cytochrome P450 family. The cofactor is heme.

It localises to the endoplasmic reticulum membrane. Its subcellular location is the microsome membrane. The catalysed reaction is an organic molecule + reduced [NADPH--hemoprotein reductase] + O2 = an alcohol + oxidized [NADPH--hemoprotein reductase] + H2O + H(+). Functionally, cytochromes P450 are a group of heme-thiolate monooxygenases. In liver microsomes, this enzyme is involved in an NADPH-dependent electron transport pathway. It oxidizes a variety of structurally unrelated compounds, including steroids, fatty acids, and xenobiotics. The chain is Cytochrome P450 4B1 (Cyp4b1) from Rattus norvegicus (Rat).